A 545-amino-acid chain; its full sequence is MKNTFILGIEGTAWNLSAAIVTETEIIAEVTETYKPTAGGIHPREAAQHHAKYAASVIKRLLAEAKEKGVKPSDIDGIAFSQGPGLGPCLRTVATAARMLSISLGIPLIGVNHCIAHIEIGIWRTPAMDPVVLYVSGANSQVISYMGGRYRVFGETLDIGLGNALDKFARGANLPHPGGPKIEAYAKNATKYIHLPYVIKGMDLSFSGLSTAASEALKKAPLEDVCYSYQETAFAMVVEVAERALAHTGKKEVLLAGGVGANTRLREMLNDMCEARGAKFYVPEKRFMGDNGTMIAYTGLLMYKSGNTLSLEDSRVNPSYRTDDVKVTWIQEEKMKRVPEISPGTSLKLGELLDNGAEAIVYLEEGPEGKKILVKERVPKAYRYKEIDERIRTERNRTEARLMSESRRHGVSTPIIYDVEDFKLKMQYIDGVPIKYLVTPELSEKVGELVGKLHSAGIVHGDLTTSNILLAGERLYLLDFGLAYYDKGLEARGVDVHVLFQTFESTHRNHEALIEAFKKGYRRTFIDSEDVLTRVEEIKKRARYA.

Residues 1-329 form a kae1 region; sequence MKNTFILGIE…YRTDDVKVTW (329 aa). Fe cation is bound by residues His113, His117, and Tyr134. Residues 134–138, Asp166, Gly179, Glu183, and Asn262 contribute to the L-threonylcarbamoyladenylate site; that span reads YVSGA. Asp290 provides a ligand contact to Fe cation. A Protein kinase domain is found at 340–545; that stretch reads EISPGTSLKL…EEIKKRARYA (206 aa). ATP-binding positions include 353–361 and Lys375; that span reads LDNGAEAIV. The Proton acceptor; for kinase activity role is filled by Asp462.

The protein in the N-terminal section; belongs to the KAE1 / TsaD family. It in the C-terminal section; belongs to the protein kinase superfamily. Tyr protein kinase family. BUD32 subfamily. As to quaternary structure, component of the KEOPS complex that consists of Kae1, Bud32, Cgi121 and Pcc1; the whole complex dimerizes. It depends on Fe(2+) as a cofactor.

The protein localises to the cytoplasm. The enzyme catalyses L-seryl-[protein] + ATP = O-phospho-L-seryl-[protein] + ADP + H(+). It carries out the reaction L-threonyl-[protein] + ATP = O-phospho-L-threonyl-[protein] + ADP + H(+). It catalyses the reaction L-threonylcarbamoyladenylate + adenosine(37) in tRNA = N(6)-L-threonylcarbamoyladenosine(37) in tRNA + AMP + H(+). Required for the formation of a threonylcarbamoyl group on adenosine at position 37 (t(6)A37) in tRNAs that read codons beginning with adenine. Is a component of the KEOPS complex that is probably involved in the transfer of the threonylcarbamoyl moiety of threonylcarbamoyl-AMP (TC-AMP) to the N6 group of A37. The Kae1 domain likely plays a direct catalytic role in this reaction. The Bud32 domain probably displays kinase activity that regulates Kae1 function. The sequence is that of Probable bifunctional tRNA threonylcarbamoyladenosine biosynthesis protein from Methanosarcina barkeri (strain Fusaro / DSM 804).